The chain runs to 208 residues: Glycerol-3-phosphate acyltransferase 1 (208 aa).

Helical transmembrane passes span Val-52–Ile-72, Trp-77–Phe-97, Phe-112–Ile-132, Ile-140–His-160, and Ser-161–Leu-181.

The protein belongs to the PlsY family. In terms of assembly, probably interacts with PlsX.

The protein localises to the cell membrane. It carries out the reaction an acyl phosphate + sn-glycerol 3-phosphate = a 1-acyl-sn-glycero-3-phosphate + phosphate. It functions in the pathway lipid metabolism; phospholipid metabolism. In terms of biological role, catalyzes the transfer of an acyl group from acyl-phosphate (acyl-PO(4)) to glycerol-3-phosphate (G3P) to form lysophosphatidic acid (LPA). This enzyme utilizes acyl-phosphate as fatty acyl donor, but not acyl-CoA or acyl-ACP. The polypeptide is Glycerol-3-phosphate acyltransferase 1 (Dehalococcoides mccartyi (strain ATCC BAA-2266 / KCTC 15142 / 195) (Dehalococcoides ethenogenes (strain 195))).